The sequence spans 444 residues: C4-dicarboxylate transport protein (444 aa).

A run of 9 helical transmembrane segments spans residues 21-41 (HLYV…HFYP), 57-77 (LVKM…IAGM), 92-112 (IYFL…ANVV), 161-181 (GDIL…ALVG), 201-221 (LVSI…AFTI), 234-254 (LLIG…LGAV), 320-340 (IYMT…LSLS), 345-365 (LLLV…AGFI), and 368-388 (AATL…ILGI).

It belongs to the dicarboxylate/amino acid:cation symporter (DAACS) (TC 2.A.23) family.

The protein resides in the cell inner membrane. Responsible for the transport of dicarboxylates such as succinate, fumarate, and malate from the periplasm across the membrane. This chain is C4-dicarboxylate transport protein, found in Brucella anthropi (strain ATCC 49188 / DSM 6882 / CCUG 24695 / JCM 21032 / LMG 3331 / NBRC 15819 / NCTC 12168 / Alc 37) (Ochrobactrum anthropi).